The chain runs to 418 residues: Delta(14)-sterol reductase TM7SF2 (418 aa).

The next 6 helical transmembrane spans lie at 13–35 (FGGP…HLLL), 62–81 (ALLL…LLPA), 102–124 (GFQA…LPLG), 129–148 (MLLP…SLLL), 255–277 (FGFM…QAQF), and 287–304 (LPMA…YYIF). Residues K311, R315, L338, W343, and 350–351 (NY) each bind NADP(+). Residues 355 to 377 (LIMALAWSLPCGLSHLLPYFYVL) traverse the membrane as a helical segment. NADP(+) is bound by residues D390, 394-398 (CLQKY), and Y405.

This sequence belongs to the ERG4/ERG24 family. In terms of tissue distribution, strongly expressed in liver, weaker in ovary, testis, kidney and brain.

It localises to the endoplasmic reticulum membrane. The protein resides in the microsome membrane. It catalyses the reaction 4,4-dimethyl-5alpha-cholesta-8,24-dien-3beta-ol + NADP(+) = 4,4-dimethyl-5alpha-cholesta-8,14,24-trien-3beta-ol + NADPH + H(+). It carries out the reaction 5alpha-cholest-8,14-dien-3beta-ol + NADPH + H(+) = 5alpha-cholest-8-en-3beta-ol + NADP(+). The catalysed reaction is 4,4-dimethyl-8,14-cholestadien-3beta-ol + NADPH + H(+) = 4,4-dimethyl-5alpha-cholest-8-en-3beta-ol + NADP(+). Its pathway is steroid biosynthesis; cholesterol biosynthesis. In terms of biological role, catalyzes the reduction of the C14-unsaturated bond of lanosterol, as part of the metabolic pathway leading to cholesterol biosynthesis. The sequence is that of Delta(14)-sterol reductase TM7SF2 (Tm7sf2) from Mus musculus (Mouse).